The primary structure comprises 281 residues: Very long chain fatty acid elongase 7 (281 aa).

A2 bears the N-acetylalanine mark. Residues 2–27 (AFSDLTSRTVRLYDNWIKDADPRVED) are Lumenal-facing. The helical transmembrane segment at 28 to 48 (WLLMSSPLPQTIILGFYVYFV) threads the bilayer. The Cytoplasmic segment spans residues 49-66 (TSLGPKLMENRKPFELKK). The chain crosses the membrane as a helical span at residues 67–87 (VMITYNFSIVLFSVYMFYEFI). Residues 88-115 (MSGWGTGYSFRCDIVDYSQSPTALRMVR) are Lumenal-facing. Residues C99 and C231 are joined by a disulfide bond. The chain crosses the membrane as a helical span at residues 116 to 136 (TCWLYYFSKFIELLDTIFFIL). The 3-oxoeicosanoyl-CoA site is built by K124, R137, K139, Q142, and H147. At 137–142 (RKKNSQ) the chain is on the cytoplasmic side. The helical transmembrane segment at 143–162 (VTFLHVFHHTIMPWTWWFGV) threads the bilayer. The HxxHH motif signature appears at 147–151 (HVFHH). H150 functions as the Nucleophile in the catalytic mechanism. The Lumenal portion of the chain corresponds to 163–171 (KFAAGGLGT). The helical transmembrane segment at 172–194 (FHAFLNTAVHVVMYSYYGLCALG) threads the bilayer. 4 residues coordinate 3-oxoeicosanoyl-CoA: Y187, K204, T208, and Q211. At 195-206 (PDYQKYLWWKKY) the chain is on the cytoplasmic side. The helical transmembrane segment at 207–227 (LTSLQLIQFVLITIHISQFFF) threads the bilayer. At 228 to 236 (MEDCKYQFP) the chain is on the lumenal side. A helical transmembrane segment spans residues 237–257 (VFQYIIMSYGCIFLLLFLHFW). The Cytoplasmic portion of the chain corresponds to 258-281 (YRAYTKGQRLPKTVKHGICKNKDH). R266 contacts 3-oxoeicosanoyl-CoA. The Di-lysine motif signature appears at 277–281 (KNKDH).

Belongs to the ELO family. ELOVL7 subfamily. Homodimer. Interacts with TECR.

The protein resides in the endoplasmic reticulum membrane. It catalyses the reaction a very-long-chain acyl-CoA + malonyl-CoA + H(+) = a very-long-chain 3-oxoacyl-CoA + CO2 + CoA. The enzyme catalyses eicosanoyl-CoA + malonyl-CoA + H(+) = 3-oxodocosanoyl-CoA + CO2 + CoA. The catalysed reaction is (5Z,8Z,11Z,14Z)-eicosatetraenoyl-CoA + malonyl-CoA + H(+) = (7Z,10Z,13Z,16Z)-3-oxodocosatetraenoyl-CoA + CO2 + CoA. It carries out the reaction (6Z,9Z,12Z)-octadecatrienoyl-CoA + malonyl-CoA + H(+) = (8Z,11Z,14Z)-3-oxoeicosatrienoyl-CoA + CO2 + CoA. It catalyses the reaction (9Z,12Z)-octadecadienoyl-CoA + malonyl-CoA + H(+) = (11Z,14Z)-3-oxoicosa-11,14-dienoyl-CoA + CO2 + CoA. The enzyme catalyses (9Z)-octadecenoyl-CoA + malonyl-CoA + H(+) = 3-oxo-(11Z)-eicosenoyl-CoA + CO2 + CoA. The catalysed reaction is octadecanoyl-CoA + malonyl-CoA + H(+) = 3-oxoeicosanoyl-CoA + CO2 + CoA. It carries out the reaction hexadecanoyl-CoA + malonyl-CoA + H(+) = 3-oxooctadecanoyl-CoA + CO2 + CoA. It catalyses the reaction (9Z,12Z,15Z)-octadecatrienoyl-CoA + malonyl-CoA + H(+) = (11Z,14Z,17Z)-3-oxoeicosatrienoyl-CoA + CO2 + CoA. The protein operates within lipid metabolism; fatty acid biosynthesis. In terms of biological role, catalyzes the first and rate-limiting reaction of the four reactions that constitute the long-chain fatty acids elongation cycle. This endoplasmic reticulum-bound enzymatic process allows the addition of 2 carbons to the chain of long- and very long-chain fatty acids (VLCFAs) per cycle. Condensing enzyme with higher activity toward C18 acyl-CoAs, especially C18:3(n-3) acyl-CoAs and C18:3(n-6)-CoAs. Also active toward C20:4-, C18:0-, C18:1-, C18:2- and C16:0-CoAs, and weakly toward C20:0-CoA. Little or no activity toward C22:0-, C24:0-, or C26:0-CoAs. May participate in the production of saturated and polyunsaturated VLCFAs of different chain lengths that are involved in multiple biological processes as precursors of membrane lipids and lipid mediators. In Bos taurus (Bovine), this protein is Very long chain fatty acid elongase 7.